The sequence spans 902 residues: 4-hydroxyphenylacetate decarboxylase glycyl radical subunit (902 aa).

The PFL domain maps to K38–L774. Residues S348 and C507 each coordinate 4-hydroxyphenylacetate. The active-site Cysteine radical intermediate is the C507. Residue E509 is the Proton donor of the active site. H540 and E641 together coordinate 4-hydroxyphenylacetate. Residues G782 to V902 enclose the Glycine radical domain. Residue G877 is modified to Glycine radical.

This sequence belongs to the glycyl radical enzyme (GRE) family. HPAD subfamily. Heterooctamer consisting of 4 large (HpdB) subunits and 4 small (HpdC) subunits, arranged as a tetramer of heterodimers. Also forms a catalytically inactive homodimer. In terms of processing, requires the activating protein CsdA to generate the key active site glycyl radical that is involved in catalysis. Phosphorylated on serine. Phosphorylation may trigger the formation of the active heterooctamers and thereby regulates enzyme activity.

It carries out the reaction 4-hydroxyphenylacetate + H(+) = 4-methylphenol + CO2. The catalysed reaction is 3,4-dihydroxyphenylacetate + H(+) = 4-methylcatechol + CO2. In terms of biological role, glycyl radical subunit of the HPA decarboxylase that decarboxylates phenylacetates with a hydroxyl group in the p-position. Active toward 4-hydroxyphenylacetate and 3,4-dihydroxyphenylacetate, forming 4-methylphenol and 4-methylcatechol, respectively. Is likely involved in the catabolism of aromatic amino acids such as tyrosine fermentation. 4-methylphenol (p-cresol) formation provides metabolic toxicity, which allows an active suppression of other microbes and may provide growth advantages for the producers in highly competitive environments. The large subunit is the catalytic subunit that binds the substrate. The chain is 4-hydroxyphenylacetate decarboxylase glycyl radical subunit from Clostridioides difficile (strain 630) (Peptoclostridium difficile).